The following is a 498-amino-acid chain: Zinc finger protein 497 (498 aa).

The disordered stretch occupies residues 30–104; that stretch reads SEGAVSGGWG…LRPSPLPEEP (75 aa). 14 C2H2-type zinc fingers span residues 106-128, 134-156, 162-184, 190-212, 218-240, 246-268, 274-296, 302-324, 330-352, 358-380, 386-408, 414-436, 442-464, and 470-492; these read CRCGECGKAFSQGSYLLQHRRVH, YTCPECGKAFAWSSNLSQHQRIH, YACRECGKAFRAHSQLIHHQETH, FRCPDCGKSFGRSTTLVQHRRTH, YECPECGKAFSWNSNFLEHRRVH, HACRDCGKAFSQSSNLAEHLKIH, HACPDCGKAFVRVAGLRQHRRTH, FPCAECGKAFRESSQLLQHQRTH, FECAECGQAFVMGSYLAEHRRVH, HACAQCGKAFSQRSNLLSHRRTH, FACADCGKAFRGSSGLAHHRLSH, FACAECGKAFRGSSELRQHQRLH, FVCAHCSKAFVRKSELLSHRRTH, and YACGECGKPFSHRCNLNEHQKRH.

It belongs to the krueppel C2H2-type zinc-finger protein family.

The protein resides in the nucleus. In terms of biological role, may be involved in transcriptional regulation. This chain is Zinc finger protein 497 (ZNF497), found in Homo sapiens (Human).